Consider the following 328-residue polypeptide: dTDP-3,4-didehydro-2,6-dideoxy-alpha-D-glucose 3-reductase (328 aa).

R20 lines the substrate pocket. NADP(+)-binding positions include 38–39 (SR), L75, and H80. K98 serves as the catalytic Proton donor. Residues R166 and D178 each contribute to the NADP(+) site. Substrate is bound by residues Y236 and T256.

The protein belongs to the Gfo/Idh/MocA family.

It carries out the reaction dTDP-4-dehydro-2,6-dideoxy-alpha-D-glucose + NADP(+) = dTDP-3,4-didehydro-2,6-dideoxy-alpha-D-glucose + NADPH + H(+). It functions in the pathway antibiotic biosynthesis. Involved in the biosynthesis of one of the two 2,6-deoxysugars, dTDP-L-oleandrose, attached to the macrolactone ring oleandolide to produce the aglycone antibiotic oleandomycin. Catalyzes the reduction of the C-3 keto moiety of dTDP-3,4-diketo-2,6-dideoxy-alpha-D-glucose to yield dTDP-4-keto-2,6-dideoxy-alpha-D-glucose. NADPH is the better reductant, however NADH can also be used. The protein is dTDP-3,4-didehydro-2,6-dideoxy-alpha-D-glucose 3-reductase of Streptomyces antibioticus.